A 678-amino-acid polypeptide reads, in one-letter code: DNA ligase (678 aa).

Residues 34-38, 83-84, and Glu-114 each bind NAD(+); these read DSEYD and SL. Lys-116 (N6-AMP-lysine intermediate) is an active-site residue. NAD(+) is bound by residues Arg-137, Glu-176, Lys-293, and Lys-317. The Zn(2+) site is built by Cys-411, Cys-414, Cys-429, and Cys-435. The BRCT domain occupies 594-678; the sequence is PTRQPLNGES…LMAGYGQTLS (85 aa).

The protein belongs to the NAD-dependent DNA ligase family. LigA subfamily. Mg(2+) is required as a cofactor. It depends on Mn(2+) as a cofactor.

It carries out the reaction NAD(+) + (deoxyribonucleotide)n-3'-hydroxyl + 5'-phospho-(deoxyribonucleotide)m = (deoxyribonucleotide)n+m + AMP + beta-nicotinamide D-nucleotide.. Its function is as follows. DNA ligase that catalyzes the formation of phosphodiester linkages between 5'-phosphoryl and 3'-hydroxyl groups in double-stranded DNA using NAD as a coenzyme and as the energy source for the reaction. It is essential for DNA replication and repair of damaged DNA. In Acinetobacter baumannii (strain SDF), this protein is DNA ligase.